Reading from the N-terminus, the 93-residue chain is UPF0390 protein C24B10.18 (93 aa).

Residues 1–32 are disordered; sequence MAQGEFKKKKNSSANKGGRVTKHSKNPKKGAR. Over residues 19-31 the composition is skewed to basic residues; the sequence is RVTKHSKNPKKGA.

The protein belongs to the UPF0390 family.

The protein is UPF0390 protein C24B10.18 of Schizosaccharomyces pombe (strain 972 / ATCC 24843) (Fission yeast).